The primary structure comprises 81 residues: Short neurotoxin 2 (81 aa).

The first 21 residues, methionine 1–threonine 21, serve as a signal peptide directing secretion. 4 cysteine pairs are disulfide-bonded: cysteine 24/cysteine 43, cysteine 38/cysteine 60, cysteine 62/cysteine 73, and cysteine 74/cysteine 79.

It belongs to the three-finger toxin family. Short-chain subfamily. Type I alpha-neurotoxin sub-subfamily. In terms of tissue distribution, expressed by the venom gland.

Its subcellular location is the secreted. Its function is as follows. Binds to muscle nicotinic acetylcholine receptor (nAChR) and inhibit acetylcholine from binding to the receptor, thereby impairing neuromuscular transmission. The sequence is that of Short neurotoxin 2 from Cryptophis nigrescens (Eastern small-eyed snake).